A 73-amino-acid chain; its full sequence is Probable minor pilin MMP0528 (73 aa).

Positions 1–10 (MLKKLYSKKG) are excised as a propeptide. A QXSXEXXXL motif is present at residues 11–19 (QVSMEMGIL).

In terms of processing, the N-terminus is probably cleaved by the prepilin peptidase EppA, which recognizes the class III signal sequence.

The protein localises to the secreted. It localises to the cell surface. It is found in the fimbrium. The polypeptide is Probable minor pilin MMP0528 (Methanococcus maripaludis (strain DSM 14266 / JCM 13030 / NBRC 101832 / S2 / LL)).